The following is a 141-amino-acid chain: Hemoglobin subunit alpha-A (141 aa).

One can recognise a Globin domain in the interval 1-141 (VLSAADKTNV…VGTVLTAKYR (141 aa)). O2 is bound at residue H58. H87 serves as a coordination point for heme b.

This sequence belongs to the globin family. As to quaternary structure, heterotetramer of two alpha chains and two beta chains. In terms of tissue distribution, red blood cells.

Its function is as follows. Involved in oxygen transport from the lung to the various peripheral tissues. The polypeptide is Hemoglobin subunit alpha-A (HBAA) (Branta canadensis (Canada goose)).